The sequence spans 204 residues: dTTP/UTP pyrophosphatase (204 aa).

The active-site Proton acceptor is the D68.

The protein belongs to the Maf family. YhdE subfamily. A divalent metal cation is required as a cofactor.

It localises to the cytoplasm. It catalyses the reaction dTTP + H2O = dTMP + diphosphate + H(+). The catalysed reaction is UTP + H2O = UMP + diphosphate + H(+). Nucleoside triphosphate pyrophosphatase that hydrolyzes dTTP and UTP. May have a dual role in cell division arrest and in preventing the incorporation of modified nucleotides into cellular nucleic acids. This is dTTP/UTP pyrophosphatase from Thermotoga maritima (strain ATCC 43589 / DSM 3109 / JCM 10099 / NBRC 100826 / MSB8).